A 413-amino-acid polypeptide reads, in one-letter code: Serine hydroxymethyltransferase (413 aa).

(6S)-5,6,7,8-tetrahydrofolate is bound by residues L119 and 123–125 (GHL). K228 carries the post-translational modification N6-(pyridoxal phosphate)lysine. 351-353 (SPF) is a (6S)-5,6,7,8-tetrahydrofolate binding site.

This sequence belongs to the SHMT family. Homodimer. Requires pyridoxal 5'-phosphate as cofactor.

It localises to the cytoplasm. It carries out the reaction (6R)-5,10-methylene-5,6,7,8-tetrahydrofolate + glycine + H2O = (6S)-5,6,7,8-tetrahydrofolate + L-serine. It functions in the pathway one-carbon metabolism; tetrahydrofolate interconversion. Its pathway is amino-acid biosynthesis; glycine biosynthesis; glycine from L-serine: step 1/1. Its function is as follows. Catalyzes the reversible interconversion of serine and glycine with tetrahydrofolate (THF) serving as the one-carbon carrier. This reaction serves as the major source of one-carbon groups required for the biosynthesis of purines, thymidylate, methionine, and other important biomolecules. Also exhibits THF-independent aldolase activity toward beta-hydroxyamino acids, producing glycine and aldehydes, via a retro-aldol mechanism. This is Serine hydroxymethyltransferase from Anoxybacillus flavithermus (strain DSM 21510 / WK1).